A 259-amino-acid chain; its full sequence is L-cystine import ATP-binding protein TcyN (259 aa).

In terms of domain architecture, ABC transporter spans 2-239 (IEIKNIHKQF…TKKDRTRQFL (238 aa)). An ATP-binding site is contributed by 34–41 (GPSGSGKT).

This sequence belongs to the ABC transporter superfamily. L-cystine importer (TC 3.A.1.3.13) family. The complex is composed of two ATP-binding proteins (TcyN), two transmembrane proteins (TcyL and TcyM) and two solute-binding proteins (TcyJ and TcyK).

It is found in the cell membrane. In terms of biological role, part of the ABC transporter complex TcyJKLMN involved in L-cystine import. Responsible for energy coupling to the transport system. Is also involved in cystathionine, djenkolate, and S-methylcysteine transport. This chain is L-cystine import ATP-binding protein TcyN (tcyN), found in Bacillus subtilis (strain 168).